The sequence spans 651 residues: Protein SCARECROW 1 (651 aa).

Disordered regions lie at residues 1 to 33 (MGSS…ITSL) and 188 to 277 (SDPA…KQRD). Pro residues predominate over residues 190-228 (PAPPPPPPPSHPALLPPDATAPPPPPTSVAALPPPPPPQ). Residues 253-280 (TAEETAAAAAAAKERKEEQRRKQRDEEG) are a coiled coil. Residues 254-263 (AEETAAAAAA) are compositionally biased toward low complexity. The segment covering 264-277 (AKERKEEQRRKQRD) has biased composition (basic and acidic residues). The 371-residue stretch at 274 to 644 (KQRDEEGLHL…LCLLTASAWR (371 aa)) folds into the GRAS domain. The tract at residues 281 to 345 (LHLLTLLLQC…VSSCLGLYAP (65 aa)) is leucine repeat I (LRI). Positions 288–292 (LQCAE) match the LxCxE motif motif. The VHIID stretch occupies residues 364–429 (FQVFNGISPF…GGPPRVRLTG (66 aa)). The VHIID motif lies at 395 to 399 (VHIID). Residues 439 to 471 (ATGKRLSDFADTLGLPFEFCPVADKAGNLDPEK) are leucine repeat II (LRII). The segment at 480-567 (VAVHWLRHSL…QQLLSREIRN (88 aa)) is PFYRE. The SAW stretch occupies residues 570–644 (AVGGPARTGD…LCLLTASAWR (75 aa)).

The protein belongs to the GRAS family. Interacts with SHR1, but not with SHR2. As to expression, expressed in the initial daughter cell before its asymmetric division and remains expressed in the endodermal cell layer after the division.

The protein localises to the nucleus. In terms of biological role, transcription factor required for quiescent center cells specification and maintenance of surrounding stem cells, and for the asymmetric cell division involved in radial pattern formation in roots. Essential for cell division but not differentiation of the ground tissue. Regulates the radial organization of the shoot axial organs. Restricts SHR movment and sequesters it into the nucleus of the endodermis. The protein is Protein SCARECROW 1 (SCR1) of Oryza sativa subsp. japonica (Rice).